The following is a 163-amino-acid chain: NADH-quinone oxidoreductase subunit B (163 aa).

Cys-32, Cys-33, Cys-98, and Cys-127 together coordinate [4Fe-4S] cluster.

The protein belongs to the complex I 20 kDa subunit family. NDH-1 is composed of 14 different subunits. Subunits NuoB, C, D, E, F, and G constitute the peripheral sector of the complex. [4Fe-4S] cluster is required as a cofactor.

It is found in the cell inner membrane. It carries out the reaction a quinone + NADH + 5 H(+)(in) = a quinol + NAD(+) + 4 H(+)(out). In terms of biological role, NDH-1 shuttles electrons from NADH, via FMN and iron-sulfur (Fe-S) centers, to quinones in the respiratory chain. Couples the redox reaction to proton translocation (for every two electrons transferred, four hydrogen ions are translocated across the cytoplasmic membrane), and thus conserves the redox energy in a proton gradient. The polypeptide is NADH-quinone oxidoreductase subunit B (Pelobacter propionicus (strain DSM 2379 / NBRC 103807 / OttBd1)).